The sequence spans 95 residues: Integration host factor subunit beta (95 aa).

The protein belongs to the bacterial histone-like protein family. Heterodimer of an alpha and a beta chain.

In terms of biological role, this protein is one of the two subunits of integration host factor, a specific DNA-binding protein that functions in genetic recombination as well as in transcriptional and translational control. The sequence is that of Integration host factor subunit beta from Klebsiella pneumoniae subsp. pneumoniae (strain ATCC 700721 / MGH 78578).